A 368-amino-acid chain; its full sequence is High affinity iron permease 1 (368 aa).

7 helical membrane passes run 8-28 (VPIFFILFRETTEAAIIISVL), 50-70 (VWIGGAAGLFICLCIGAAFIA), 86-106 (IWEGVFSLVAVIMITAMGLAM), 142-162 (AFFVLPFITVLREGLEAVVFI), 173-193 (SIPIAAIMGIICGCLVGFLIY), 204-224 (FFVFSTVVLYLVAAGLMAKGV), and 287-307 (SIISYCLYWLFVCCYLVFSYF). Positions 346 to 368 (DKESDEEANNHPKEKIESDAIKA) are disordered. The segment covering 353 to 368 (ANNHPKEKIESDAIKA) has biased composition (basic and acidic residues).

This sequence belongs to the oxidase-dependent Fe transporter (OFeT) (TC 9.A.10.1) family.

It localises to the cell membrane. Functionally, high affinity iron permease required for iron uptake in iron-depleted environments. Required for full virulence in mice. This Rhizopus delemar (strain RA 99-880 / ATCC MYA-4621 / FGSC 9543 / NRRL 43880) (Mucormycosis agent) protein is High affinity iron permease 1.